The chain runs to 397 residues: Phosphoglycerate kinase (397 aa).

Substrate is bound by residues 21–23 (DFN), arginine 37, 60–63 (HLGR), arginine 119, and arginine 152. ATP contacts are provided by residues lysine 203, glycine 294, glutamate 325, and 354 to 357 (GGDS).

The protein belongs to the phosphoglycerate kinase family. As to quaternary structure, monomer.

The protein localises to the cytoplasm. The enzyme catalyses (2R)-3-phosphoglycerate + ATP = (2R)-3-phospho-glyceroyl phosphate + ADP. The protein operates within carbohydrate degradation; glycolysis; pyruvate from D-glyceraldehyde 3-phosphate: step 2/5. The protein is Phosphoglycerate kinase of Chlorobaculum tepidum (strain ATCC 49652 / DSM 12025 / NBRC 103806 / TLS) (Chlorobium tepidum).